The primary structure comprises 272 residues: 4-hydroxy-tetrahydrodipicolinate reductase (272 aa).

NAD(+) is bound at residue 10–15 (GAAGRM). Arg-37 lines the NADP(+) pocket. Residues 100–102 (GTT) and 124–127 (SGNM) each bind NAD(+). The Proton donor/acceptor role is filled by His-157. Position 158 (His-158) interacts with (S)-2,3,4,5-tetrahydrodipicolinate. Lys-161 functions as the Proton donor in the catalytic mechanism. 167-168 (GT) contacts (S)-2,3,4,5-tetrahydrodipicolinate.

The protein belongs to the DapB family.

Its subcellular location is the cytoplasm. The catalysed reaction is (S)-2,3,4,5-tetrahydrodipicolinate + NAD(+) + H2O = (2S,4S)-4-hydroxy-2,3,4,5-tetrahydrodipicolinate + NADH + H(+). It catalyses the reaction (S)-2,3,4,5-tetrahydrodipicolinate + NADP(+) + H2O = (2S,4S)-4-hydroxy-2,3,4,5-tetrahydrodipicolinate + NADPH + H(+). It functions in the pathway amino-acid biosynthesis; L-lysine biosynthesis via DAP pathway; (S)-tetrahydrodipicolinate from L-aspartate: step 4/4. In terms of biological role, catalyzes the conversion of 4-hydroxy-tetrahydrodipicolinate (HTPA) to tetrahydrodipicolinate. This is 4-hydroxy-tetrahydrodipicolinate reductase from Methylocella silvestris (strain DSM 15510 / CIP 108128 / LMG 27833 / NCIMB 13906 / BL2).